A 239-amino-acid chain; its full sequence is UPF0173 metal-dependent hydrolase rrnAC0300 (239 aa).

The protein belongs to the UPF0173 family.

The polypeptide is UPF0173 metal-dependent hydrolase rrnAC0300 (Haloarcula marismortui (strain ATCC 43049 / DSM 3752 / JCM 8966 / VKM B-1809) (Halobacterium marismortui)).